We begin with the raw amino-acid sequence, 104 residues long: Replication restart protein PriB (104 aa).

Residues 1 to 101 (MTNRLELSGV…LHADHIEIIC (101 aa)) form the SSB domain.

It belongs to the PriB family. Homodimer. Interacts with PriA and DnaT. Component of the replication restart primosome. Primosome assembly occurs via a 'hand-off' mechanism. PriA binds to replication forks, subsequently PriB then DnaT bind; DnaT then displaces ssDNA to generate the helicase loading substrate.

Involved in the restart of stalled replication forks, which reloads the replicative helicase on sites other than the origin of replication; the PriA-PriB pathway is the major replication restart pathway. During primosome assembly it facilitates complex formation between PriA and DnaT on DNA; stabilizes PriA on DNA. Stimulates the DNA unwinding activity of PriA helicase. This is Replication restart protein PriB from Photobacterium profundum (strain SS9).